The sequence spans 396 residues: Gap junction gamma-1 protein (396 aa).

Over 1 to 18 the chain is Cytoplasmic; it reads MSWSFLTRLLEEIHNHST. Residues 19 to 39 form a helical membrane-spanning segment; that stretch reads FVGKIWLTVLIVFRIVLTAVG. At 40–75 the chain is on the extracellular side; the sequence is GESIYYDEQSKFVCNTEQPGCENVCYDAFAPLSHVR. The chain crosses the membrane as a helical span at residues 76–96; the sequence is FWVFQIILVATPSVMYLGYAI. The Cytoplasmic segment spans residues 97 to 175; that stretch reads HKIAKMEHGE…RRIREDGLMK (79 aa). Residues 145-165 are disordered; the sequence is ELESEKENKEQSQPKPKHDGR. A compositionally biased stretch (basic and acidic residues) spans 147-156; sequence ESEKENKEQS. A helical membrane pass occupies residues 176–198; that stretch reads IYVLQLLARTVFEVGFLIGQYFL. Residues 199-229 are Extracellular-facing; sequence YGFQVHPFYVCSRLPCPHKIDCFISRPTEKT. The chain crosses the membrane as a helical span at residues 230–250; the sequence is IFLLIMYGVTGLCLLLNIWEM. Residues 251–396 are Cytoplasmic-facing; the sequence is LHLGFGTIRD…SGDGKTSVWI (146 aa). Residues 303–358 are a coiled coil; it reads ELSNAKIAYKQNKANIAQEQQYGSHEEHLPADLETLQREIRMAQERLDLAIQAYHH. The segment at 357-396 is disordered; the sequence is HHQNNPHGPREKKAKVGSKSGSNKSSISSKSGDGKTSVWI. The span at 373–396 shows a compositional bias: low complexity; sequence GSKSGSNKSSISSKSGDGKTSVWI.

This sequence belongs to the connexin family. Gamma-type subfamily. A connexon is composed of a hexamer of connexins. Interacts with CNST.

It localises to the cell membrane. It is found in the cell junction. Its subcellular location is the gap junction. One gap junction consists of a cluster of closely packed pairs of transmembrane channels, the connexons, through which materials of low MW diffuse from one cell to a neighboring cell. This Cricetulus griseus (Chinese hamster) protein is Gap junction gamma-1 protein (GJC1).